We begin with the raw amino-acid sequence, 129 residues long: uncharacterized protein (129 aa).

2 C2H2-type zinc fingers span residues 75–99 (FVCP…YTEH) and 101–124 (KVCP…CKKH).

Functionally, essential for virus function. This is an uncharacterized protein from Saccharolobus solfataricus (Sulfolobus solfataricus).